A 39-amino-acid polypeptide reads, in one-letter code: Large ribosomal subunit protein bL36 (39 aa).

This sequence belongs to the bacterial ribosomal protein bL36 family.

The sequence is that of Large ribosomal subunit protein bL36 from Pediococcus pentosaceus (strain ATCC 25745 / CCUG 21536 / LMG 10740 / 183-1w).